Reading from the N-terminus, the 1114-residue chain is OTU domain-containing protein 4 (1114 aa).

At Met-1 the chain carries N-acetylmethionine. Residues 1-22 (MEAAVGVPDGGDQGGAGPREDA) are disordered. The segment covering 8-17 (PDGGDQGGAG) has biased composition (gly residues). The OTU domain maps to 34–155 (LYRKLVAKDG…GNHYDIVYPI (122 aa)). Positions 39-45 (VAKDGSC) are cys-loop. The active site involves Asp-42. The Nucleophile role is filled by Cys-45. The variable-loop stretch occupies residues 94-104 (LENPQEWVGQV). Tyr-120 is subject to Phosphotyrosine. Residues Ser-126 and Ser-128 each carry the phosphoserine modification. Position 131 is a phosphothreonine (Thr-131). Positions 143–148 (FSNGNH) are his-loop. His-148 is an active-site residue. Phosphoserine occurs at positions 166, 199, 202, 204, and 341. A disordered region spans residues 323–449 (KHTSKNLKAP…FGLSPEERRE (127 aa)). A compositionally biased stretch (low complexity) spans 392–404 (FSSHSSGSQSQKF). Residues 420–435 (RKPDRERVEDFDHTSR) show a composition bias toward basic and acidic residues. Position 439 is a phosphotyrosine (Tyr-439). The residue at position 443 (Ser-443) is a Phosphoserine. Tyr-460 is modified (phosphotyrosine). The disordered stretch occupies residues 472-567 (ALSSSSVNQS…PAEQKPAEHV (96 aa)). Low complexity predominate over residues 474–487 (SSSSVNQSASQSSN). The segment covering 496–529 (HVGDRKGSRRRMDTEERKDKDSIHGHSQLDKRPE) has biased composition (basic and acidic residues). 3 positions are modified to phosphoserine: Ser-546, Ser-893, and Ser-900. The interval 911 to 1114 (EFPEARGEHV…MGDGHRGQHT (204 aa)) is disordered. Composition is skewed to basic and acidic residues over residues 913–922 (PEARGEHVHS) and 969–1000 (NRER…DPKT). A phosphoserine mark is found at Ser-1006, Ser-1011, Ser-1014, Ser-1023, and Ser-1024. Positions 1039–1048 (SKQFYNQTYG) are enriched in polar residues. At Ser-1049 the chain carries Phosphoserine. Basic and acidic residues-rich tracts occupy residues 1067–1086 (VRSE…EGYQ) and 1096–1114 (FRGD…GQHT).

Interacts with MYD88; the interaction is direct. Interacts with ALKBH3; the interaction is direct. Interacts with USP7; the interaction is direct. Interacts with USP9X; the interaction is direct. In terms of processing, phosphorylated on Ser-202 and Ser-204 likely by CSNK2A1-CSNK2A2 serine/threonine-protein kinase complex. Activates 'Lys-63'-specific deubiquitinase activity.

It localises to the cytoplasm. The protein localises to the nucleus. The enzyme catalyses Thiol-dependent hydrolysis of ester, thioester, amide, peptide and isopeptide bonds formed by the C-terminal Gly of ubiquitin (a 76-residue protein attached to proteins as an intracellular targeting signal).. Phosphorylation on Ser-202 and Ser-204 induces 'Lys-63'-specific deubiquitinase activity. Its function is as follows. Deubiquitinase which hydrolyzes the isopeptide bond between the ubiquitin C-terminus and the lysine epsilon-amino group of the target protein. May negatively regulate inflammatory and pathogen recognition signaling in innate immune response. Upon phosphorylation at Ser-202 and Ser-204 residues, via IL-1 receptor and Toll-like receptor signaling pathway, specifically deubiquitinates 'Lys-63'-polyubiquitinated MYD88 adapter protein triggering down-regulation of NF-kappa-B-dependent transcription of inflammatory mediators. Independently of the catalytic activity, acts as a scaffold for alternative deubiquitinases to assemble specific deubiquitinase-substrate complexes. Associates with USP7 and USP9X deubiquitinases to stabilize alkylation repair enzyme ALKBH3, thereby promoting the repair of alkylated DNA lesions. The chain is OTU domain-containing protein 4 from Homo sapiens (Human).